Consider the following 290-residue polypeptide: 33 kDa chaperonin (290 aa).

Cystine bridges form between Cys-235–Cys-237 and Cys-268–Cys-271.

This sequence belongs to the HSP33 family. Under oxidizing conditions two disulfide bonds are formed involving the reactive cysteines. Under reducing conditions zinc is bound to the reactive cysteines and the protein is inactive.

It is found in the cytoplasm. Redox regulated molecular chaperone. Protects both thermally unfolding and oxidatively damaged proteins from irreversible aggregation. Plays an important role in the bacterial defense system toward oxidative stress. The protein is 33 kDa chaperonin of Streptococcus equi subsp. zooepidemicus (strain H70).